The following is a 378-amino-acid chain: Protein RecA (378 aa).

ATP is bound at residue 79–86; the sequence is GPESSGKT.

The protein belongs to the RecA family.

Its subcellular location is the cytoplasm. In terms of biological role, can catalyze the hydrolysis of ATP in the presence of single-stranded DNA, the ATP-dependent uptake of single-stranded DNA by duplex DNA, and the ATP-dependent hybridization of homologous single-stranded DNAs. It interacts with LexA causing its activation and leading to its autocatalytic cleavage. The sequence is that of Protein RecA from Streptococcus pyogenes serotype M49 (strain NZ131).